The primary structure comprises 352 residues: Ion-translocating oxidoreductase complex subunit D (352 aa).

4 helical membrane-spanning segments follow: residues 20 to 40, 42 to 62, 89 to 109, and 123 to 143; these read IMLLVLLAAVPGIAAQLWFFG, GTLVQILLASVSALLAEALVL, IPPLAPWWMVVLGTVFAVIIA, and PAMIGYVVLLISFPVQMTSWL. An FMN phosphoryl threonine modification is found at T187. 5 helical membrane passes run 214–234, 242–262, 267–287, 301–321, and 322–342; these read ILAGAGWQWVNLAWLAGGVWL, WHIPLSFLVTLALCATLGWLF, LAAPQIHLLSGATMLGAFFIL, LIFGALAGLLVWLIRSFGGYP, and DGVAFAVLLANITVPLIDYYT.

Belongs to the NqrB/RnfD family. In terms of assembly, the complex is composed of six subunits: RsxA, RsxB, RsxC, RsxD, RsxE and RsxG. FMN serves as cofactor.

It localises to the cell inner membrane. Its function is as follows. Part of a membrane-bound complex that couples electron transfer with translocation of ions across the membrane. Required to maintain the reduced state of SoxR. This chain is Ion-translocating oxidoreductase complex subunit D, found in Escherichia coli O127:H6 (strain E2348/69 / EPEC).